A 356-amino-acid polypeptide reads, in one-letter code: Phosphate acyltransferase (356 aa).

This sequence belongs to the PlsX family. In terms of assembly, homodimer. Probably interacts with PlsY.

The protein resides in the cytoplasm. It catalyses the reaction a fatty acyl-[ACP] + phosphate = an acyl phosphate + holo-[ACP]. It functions in the pathway lipid metabolism; phospholipid metabolism. Its function is as follows. Catalyzes the reversible formation of acyl-phosphate (acyl-PO(4)) from acyl-[acyl-carrier-protein] (acyl-ACP). This enzyme utilizes acyl-ACP as fatty acyl donor, but not acyl-CoA. This chain is Phosphate acyltransferase, found in Escherichia coli (strain K12 / DH10B).